Here is a 711-residue protein sequence, read N- to C-terminus: MLNPIVRKFQYGQHTVTLETGMMARQATAAVMVSMDDTAVFVTVVGQKKAKPGQDFFPLTVNYQERTYAAGRIPGSFFRREGRPSEGETLIARLIDRPIRPLFPEGFVNEVQVIATVVSVNPQVNPDIVAMIGASAALSLSGIPFNGPIGAARVGYINDQYVLNPTQDELKESKLDLVVAGTEAAVLMVESEAELLSEDQMLGAVVFGHEQQQVVIQNINELVKEAGKPRWDWQPEPVNEALNARVAALAEARLSDAYRITDKQERYAQVDVIKSETIATLLAEDETLDENELGEILHAIEKNVVRSRVLAGEPRIDGREKDMIRGLDVRTGVLPRTHGSALFTRGETQALVTATLGTARDAQVLDELMGERTDTFLFHYNFPPYSVGETGMVGSPKRREIGHGRLAKRSVLAVMPDMDKFPYTVRVVSEITESNGSSSMASVCGASLALMDAGVPIKAAVAGIAMGLVKEGDNYVVLSDILGDEDHLGDMDFKVAGSREGISALQMDIKIEGITKEIMQVALNQAKGARLHILGVMEQAINAPRGDISEFAPRIHTIKINPDKIKDVIGKGGSVIRALTEETGTTIEIEDDGTVKIAATDGEKAKHAIRRIEEITAEIEVGRVYTGKVTRIVDFGAFVAIGGGKEGLVHISQIADKRVEKVTDYLQMGQEVPVKVLEVDRQGRIRLSIKEATEQSQPAAAPEAPAAEQGE.

Mg(2+)-binding residues include Asp-486 and Asp-492. The KH domain maps to 553–612 (PRIHTIKINPDKIKDVIGKGGSVIRALTEETGTTIEIEDDGTVKIAATDGEKAKHAIRRI). One can recognise an S1 motif domain in the interval 622 to 690 (GRVYTGKVTR…RQGRIRLSIK (69 aa)). The segment at 689–711 (IKEATEQSQPAAAPEAPAAEQGE) is disordered. Residues 694–711 (EQSQPAAAPEAPAAEQGE) are compositionally biased toward low complexity.

This sequence belongs to the polyribonucleotide nucleotidyltransferase family. In terms of assembly, component of the RNA degradosome, which is a multiprotein complex involved in RNA processing and mRNA degradation. Mg(2+) serves as cofactor.

It localises to the cytoplasm. It catalyses the reaction RNA(n+1) + phosphate = RNA(n) + a ribonucleoside 5'-diphosphate. Involved in mRNA degradation. Catalyzes the phosphorolysis of single-stranded polyribonucleotides processively in the 3'- to 5'-direction. This chain is Polyribonucleotide nucleotidyltransferase, found in Shigella boydii serotype 4 (strain Sb227).